We begin with the raw amino-acid sequence, 372 residues long: Queuine tRNA-ribosyltransferase (372 aa).

Asp92 acts as the Proton acceptor in catalysis. Residues 92-96, Asp146, Gln188, and Gly215 each bind substrate; that span reads DSGGF. Residues 246–252 form an RNA binding region; that stretch reads GIGTLRE. The active-site Nucleophile is Asp265. The segment at 270–274 is RNA binding; important for wobble base 34 recognition; sequence TRLGR. Positions 303, 305, 308, and 334 each coordinate Zn(2+).

Belongs to the queuine tRNA-ribosyltransferase family. Homodimer. Within each dimer, one monomer is responsible for RNA recognition and catalysis, while the other monomer binds to the replacement base PreQ1. The cofactor is Zn(2+).

It carries out the reaction 7-aminomethyl-7-carbaguanine + guanosine(34) in tRNA = 7-aminomethyl-7-carbaguanosine(34) in tRNA + guanine. It functions in the pathway tRNA modification; tRNA-queuosine biosynthesis. Functionally, catalyzes the base-exchange of a guanine (G) residue with the queuine precursor 7-aminomethyl-7-deazaguanine (PreQ1) at position 34 (anticodon wobble position) in tRNAs with GU(N) anticodons (tRNA-Asp, -Asn, -His and -Tyr). Catalysis occurs through a double-displacement mechanism. The nucleophile active site attacks the C1' of nucleotide 34 to detach the guanine base from the RNA, forming a covalent enzyme-RNA intermediate. The proton acceptor active site deprotonates the incoming PreQ1, allowing a nucleophilic attack on the C1' of the ribose to form the product. After dissociation, two additional enzymatic reactions on the tRNA convert PreQ1 to queuine (Q), resulting in the hypermodified nucleoside queuosine (7-(((4,5-cis-dihydroxy-2-cyclopenten-1-yl)amino)methyl)-7-deazaguanosine). This Synechococcus sp. (strain CC9605) protein is Queuine tRNA-ribosyltransferase.